The primary structure comprises 1612 residues: DNA topoisomerase 2-beta (1612 aa).

N-acetylalanine is present on Ala-2. At Lys-3 the chain carries N6-acetyllysine. Glycyl lysine isopeptide (Lys-Gly) (interchain with G-Cter in SUMO2) cross-links involve residues Lys-21 and Lys-22. ATP-binding positions include Asn-100, Asn-129, and 157–159 (SSN). Glycyl lysine isopeptide (Lys-Gly) (interchain with G-Cter in SUMO2) cross-links involve residues Lys-165 and Lys-166. Residue 170–177 (GRNGYGAK) coordinates ATP. Glycyl lysine isopeptide (Lys-Gly) (interchain with G-Cter in SUMO2) cross-links involve residues Lys-216 and Lys-287. The interval 351–353 (KKK) is interaction with DNA. Residues Lys-355 and Lys-361 each participate in a glycyl lysine isopeptide (Lys-Gly) (interchain with G-Cter in SUMO2) cross-link. Residue 385 to 387 (QTK) participates in ATP binding. Residues Lys-425, Lys-427, and Lys-434 each participate in a glycyl lysine isopeptide (Lys-Gly) (interchain with G-Cter in SUMO2) cross-link. In terms of domain architecture, Toprim spans 464 to 581 (CTLILTEGDS…SLLKHGFLEE (118 aa)). Glu-470, Asp-550, and Asp-552 together coordinate Mg(2+). Glycyl lysine isopeptide (Lys-Gly) (interchain with G-Cter in SUMO2) cross-links involve residues Lys-588, Lys-593, Lys-623, Lys-631, Lys-634, Lys-664, and Lys-700. One can recognise a Topo IIA-type catalytic domain in the interval 724-1177 (IPSLVDGFKP…SPSDLWKEDL (454 aa)). Tyr-814 acts as the O-(5'-phospho-DNA)-tyrosine intermediate in catalysis. The interval 999–1008 (KLQTTLTCNS) is interaction with DNA. Lys-1080 is covalently cross-linked (Glycyl lysine isopeptide (Lys-Gly) (interchain with G-Cter in SUMO2)). The segment at 1098 to 1128 (AWKEAQEKAAEEEDSQNQHDDSSSDSGTPSG) is disordered. Residues Lys-1202, Lys-1205, Lys-1214, and Lys-1215 each participate in a glycyl lysine isopeptide (Lys-Gly) (interchain with G-Cter in SUMO2) cross-link. Ser-1224 carries the phosphoserine modification. Residues Lys-1238, Lys-1250, and Lys-1259 each participate in a glycyl lysine isopeptide (Lys-Gly) (interchain with G-Cter in SUMO2) cross-link. Residues 1245-1586 (LLKKKKGDPD…FTSEPPALPR (342 aa)) form a disordered region. At Thr-1280 the chain carries Phosphothreonine. Glycyl lysine isopeptide (Lys-Gly) (interchain with G-Cter in SUMO2) cross-links involve residues Lys-1311 and Lys-1315. 2 stretches are compositionally biased toward basic and acidic residues: residues 1322–1332 (PWSDDESKSES) and 1346–1358 (SLLRRAAAERPKY). Phosphoserine is present on residues Ser-1324, Ser-1328, Ser-1330, Ser-1332, and Ser-1346. Position 1358 is a phosphotyrosine (Tyr-1358). The span at 1362–1379 (FSEEEDDDAAAADDSNDL) shows a compositional bias: acidic residues. 2 positions are modified to phosphoserine: Ser-1363 and Ser-1376. Residue Lys-1385 forms a Glycyl lysine isopeptide (Lys-Gly) (interchain with G-Cter in SUMO2) linkage. Ser-1387 bears the Phosphoserine mark. Thr-1390 bears the Phosphothreonine mark. A Phosphoserine modification is found at Ser-1400. Tyr-1408 carries the phosphotyrosine modification. Residue Ser-1411 is modified to Phosphoserine. A compositionally biased stretch (basic and acidic residues) spans 1417-1429 (ATPEKSSNDKKSQ). A Glycyl lysine isopeptide (Lys-Gly) (interchain with G-Cter in SUMO2) cross-link involves residue Lys-1427. Residues Ser-1428, Ser-1439, and Ser-1441 each carry the phosphoserine modification. A Glycyl lysine isopeptide (Lys-Gly) (interchain with G-Cter in SUMO2) cross-link involves residue Lys-1443. The segment covering 1443-1453 (KSEDDSAKFDS) has biased composition (basic and acidic residues). Ser-1448, Ser-1453, and Ser-1460 each carry phosphoserine. A Glycyl lysine isopeptide (Lys-Gly) (interchain with G-Cter in SUMO2) cross-link involves residue Lys-1477. Residues 1493–1499 (KAKRAPK) form an interaction with PLSCR1 region. Phosphoserine occurs at positions 1509, 1511, and 1513. The segment covering 1526–1536 (GKGRGAKKRKA) has biased composition (basic residues). Residues Ser-1537 and Ser-1539 each carry the phosphoserine modification. The segment covering 1550 to 1561 (KPSKTASKKPKK) has biased composition (basic residues). Thr-1562 carries the phosphothreonine modification. Phosphoserine occurs at positions 1563 and 1568. Phosphotyrosine is present on Tyr-1596. Ser-1600 bears the Phosphoserine mark.

This sequence belongs to the type II topoisomerase family. In terms of assembly, homodimer. Interacts with KIAA1210. Interacts with PLSCR1. Requires Mg(2+) as cofactor. The cofactor is Mn(2+). Ca(2+) is required as a cofactor.

The protein resides in the nucleus. Its subcellular location is the nucleolus. The protein localises to the nucleoplasm. It carries out the reaction ATP-dependent breakage, passage and rejoining of double-stranded DNA.. Its function is as follows. Key decatenating enzyme that alters DNA topology by binding to two double-stranded DNA molecules, generating a double-stranded break in one of the strands, passing the intact strand through the broken strand, and religating the broken strand. Plays a role in B-cell differentiation. The chain is DNA topoisomerase 2-beta (Top2b) from Mus musculus (Mouse).